The chain runs to 448 residues: Probable D-serine dehydratase (448 aa).

Lysine 119 is subject to N6-(pyridoxal phosphate)lysine.

This sequence belongs to the serine/threonine dehydratase family. DsdA subfamily. Pyridoxal 5'-phosphate serves as cofactor.

The enzyme catalyses D-serine = pyruvate + NH4(+). This Pseudomonas paraeruginosa (strain DSM 24068 / PA7) (Pseudomonas aeruginosa (strain PA7)) protein is Probable D-serine dehydratase.